The following is a 100-amino-acid chain: MAKKSMIARDVKRKKMAERYAAKRSALMAAFNSAADPMSRLEIHRKIQALPRNSAPTRIRNRCWATGKPRGVYRDFGLCRNQLRERAHKGELPGVVKSSW.

This sequence belongs to the universal ribosomal protein uS14 family. Part of the 30S ribosomal subunit. Contacts proteins S3 and S10.

Functionally, binds 16S rRNA, required for the assembly of 30S particles and may also be responsible for determining the conformation of the 16S rRNA at the A site. The chain is Small ribosomal subunit protein uS14 from Synechococcus sp. (strain CC9902).